The following is a 545-amino-acid chain: ATP synthase subunit alpha (545 aa).

173–180 (GDRQTGKT) provides a ligand contact to ATP.

Belongs to the ATPase alpha/beta chains family. In terms of assembly, F-type ATPases have 2 components, CF(1) - the catalytic core - and CF(0) - the membrane proton channel. CF(1) has five subunits: alpha(3), beta(3), gamma(1), delta(1), epsilon(1). CF(0) has three main subunits: a(1), b(2) and c(9-12). The alpha and beta chains form an alternating ring which encloses part of the gamma chain. CF(1) is attached to CF(0) by a central stalk formed by the gamma and epsilon chains, while a peripheral stalk is formed by the delta and b chains.

It is found in the cell membrane. The catalysed reaction is ATP + H2O + 4 H(+)(in) = ADP + phosphate + 5 H(+)(out). Functionally, produces ATP from ADP in the presence of a proton gradient across the membrane. The alpha chain is a regulatory subunit. This Leifsonia xyli subsp. xyli (strain CTCB07) protein is ATP synthase subunit alpha.